The sequence spans 132 residues: Small ribosomal subunit protein uS8 (132 aa).

Belongs to the universal ribosomal protein uS8 family. As to quaternary structure, part of the 30S ribosomal subunit. Contacts proteins S5 and S12.

In terms of biological role, one of the primary rRNA binding proteins, it binds directly to 16S rRNA central domain where it helps coordinate assembly of the platform of the 30S subunit. This chain is Small ribosomal subunit protein uS8, found in Gluconacetobacter diazotrophicus (strain ATCC 49037 / DSM 5601 / CCUG 37298 / CIP 103539 / LMG 7603 / PAl5).